Reading from the N-terminus, the 166-residue chain is NAD(P)H-quinone oxidoreductase subunit I, chloroplastic (166 aa).

2 consecutive 4Fe-4S ferredoxin-type domains span residues 55–84 (GRIHFEFDKCIACEVCVRVCPIDLPVVDWK) and 95–124 (LNYSIDFGICIFCGNCVEYCPTNCLSMTEE). [4Fe-4S] cluster is bound by residues Cys-64, Cys-67, Cys-70, Cys-74, Cys-104, Cys-107, Cys-110, and Cys-114.

The protein belongs to the complex I 23 kDa subunit family. As to quaternary structure, NDH is composed of at least 16 different subunits, 5 of which are encoded in the nucleus. [4Fe-4S] cluster is required as a cofactor.

Its subcellular location is the plastid. It localises to the chloroplast thylakoid membrane. It catalyses the reaction a plastoquinone + NADH + (n+1) H(+)(in) = a plastoquinol + NAD(+) + n H(+)(out). The enzyme catalyses a plastoquinone + NADPH + (n+1) H(+)(in) = a plastoquinol + NADP(+) + n H(+)(out). In terms of biological role, NDH shuttles electrons from NAD(P)H:plastoquinone, via FMN and iron-sulfur (Fe-S) centers, to quinones in the photosynthetic chain and possibly in a chloroplast respiratory chain. The immediate electron acceptor for the enzyme in this species is believed to be plastoquinone. Couples the redox reaction to proton translocation, and thus conserves the redox energy in a proton gradient. This is NAD(P)H-quinone oxidoreductase subunit I, chloroplastic from Espeletia timotensis (Andean giant rosette).